The sequence spans 455 residues: GTPase Der (455 aa).

EngA-type G domains are found at residues 4 to 169 (PIVA…PKDQ) and 178 to 355 (LRVS…GQHQ). GTP is bound by residues 10-17 (GRPNVGKS), 57-61 (DTGGL), 120-123 (NKLE), 184-191 (GRPNVGKS), 233-237 (DTAGI), and 298-301 (NKWD). Residues 356–441 (RRVSTSVLNE…PVRFIFRGKP (86 aa)) enclose the KH-like domain.

This sequence belongs to the TRAFAC class TrmE-Era-EngA-EngB-Septin-like GTPase superfamily. EngA (Der) GTPase family. As to quaternary structure, associates with the 50S ribosomal subunit.

GTPase that plays an essential role in the late steps of ribosome biogenesis. The polypeptide is GTPase Der (Gloeobacter violaceus (strain ATCC 29082 / PCC 7421)).